The sequence spans 37 residues: Cytochrome b6-f complex subunit 5 (37 aa).

The helical transmembrane segment at 5–25 (LLSGIVLGLIVVTLSGLFYAA) threads the bilayer.

The protein belongs to the PetG family. In terms of assembly, the 4 large subunits of the cytochrome b6-f complex are cytochrome b6, subunit IV (17 kDa polypeptide, PetD), cytochrome f and the Rieske protein, while the 4 small subunits are PetG, PetL, PetM and PetN. The complex functions as a dimer.

The protein localises to the cellular thylakoid membrane. In terms of biological role, component of the cytochrome b6-f complex, which mediates electron transfer between photosystem II (PSII) and photosystem I (PSI), cyclic electron flow around PSI, and state transitions. PetG is required for either the stability or assembly of the cytochrome b6-f complex. The sequence is that of Cytochrome b6-f complex subunit 5 from Trichormus variabilis (strain ATCC 29413 / PCC 7937) (Anabaena variabilis).